A 209-amino-acid chain; its full sequence is Small ribosomal subunit protein uS4 (209 aa).

One can recognise an S4 RNA-binding domain in the interval 99–164 (TRLDNVVYRM…IPRVQELKEL (66 aa)).

This sequence belongs to the universal ribosomal protein uS4 family. Part of the 30S ribosomal subunit. Contacts protein S5. The interaction surface between S4 and S5 is involved in control of translational fidelity.

One of the primary rRNA binding proteins, it binds directly to 16S rRNA where it nucleates assembly of the body of the 30S subunit. Functionally, with S5 and S12 plays an important role in translational accuracy. The protein is Small ribosomal subunit protein uS4 of Natranaerobius thermophilus (strain ATCC BAA-1301 / DSM 18059 / JW/NM-WN-LF).